A 146-amino-acid chain; its full sequence is Ribosome maturation factor RimP (146 aa).

Belongs to the RimP family.

The protein resides in the cytoplasm. Required for maturation of 30S ribosomal subunits. The sequence is that of Ribosome maturation factor RimP from Helicobacter pylori (strain J99 / ATCC 700824) (Campylobacter pylori J99).